The chain runs to 391 residues: Testis-expressed protein 9 (391 aa).

Disordered regions lie at residues 1–31 (MAGRSLCLTRSSVPGTPFPPPVQQPSTPGPD) and 65–85 (QEVRSRPVSTQMKSCDDEDDY). Residues 188-351 (IGTEAQIRFL…EKQKGELMIG (164 aa)) are a coiled coil.

It localises to the cytoplasm. The protein resides in the cytoskeleton. The protein localises to the microtubule organizing center. Its subcellular location is the centrosome. It is found in the centriolar satellite. The polypeptide is Testis-expressed protein 9 (TEX9) (Homo sapiens (Human)).